The primary structure comprises 744 residues: Collagen alpha-1(VIII) chain (744 aa).

An N-terminal signal peptide occupies residues M1–A27. The segment at A29–R117 is nonhelical region (NC2). Disordered regions lie at residues S115–G393 and G459–G589. The interval G118–P571 is triple-helical region (COL1). A compositionally biased stretch (pro residues) spans P128 to L137. Over residues K168–K178 the composition is skewed to low complexity. Gly residues-rich tracts occupy residues G203–G217 and G328–G337. Composition is skewed to low complexity over residues Q466–P496 and A538–P556. A compositionally biased stretch (pro residues) spans L558–Q581. Positions A572 to M744 are nonhelical region (NC1). The 134-residue stretch at P611 to M744 folds into the C1q domain.

Homotrimers, or heterotrimers in association with alpha 2(VIII) type collagens. Four homotrimers can form a tetrahedron stabilized by central interacting C-terminal NC1 trimers. In terms of processing, prolines at the third position of the tripeptide repeating unit (G-X-Y) are hydroxylated in some or all of the chains. Post-translationally, proteolytically cleaved by neutrophil elastase, in vitro. Proteolytic processing produces the C-terminal NC1 domain fragment, vastatin. In terms of tissue distribution, expressed primarily in the subendothelium of large blood vessels. Also expressed in arterioles and venules in muscle, heart, kidney, spleen, umbilical cord, liver and lung and is also found in connective tissue layers around hair follicles, around nerve bundles in muscle, in the dura of the optic nerve, in cornea and sclera, and in the perichondrium of cartilaginous tissues. In the kidney, expressed in mesangial cells, glomerular endothelial cells, and tubular epithelial cells. Also expressed in mast cells, and in astrocytes during the repair process. Expressed in Descemet's membrane. Specifically expressed in peritoneal fibroblasts and mesothelial cells.

The protein localises to the secreted. The protein resides in the extracellular space. It localises to the extracellular matrix. Its subcellular location is the basement membrane. Its function is as follows. Macromolecular component of the subendothelium. Major component of the Descemet's membrane (basement membrane) of corneal endothelial cells. Also a component of the endothelia of blood vessels. Necessary for migration and proliferation of vascular smooth muscle cells and thus, has a potential role in the maintenance of vessel wall integrity and structure, in particular in atherogenesis. In terms of biological role, vastatin, the C-terminal fragment comprising the NC1 domain, inhibits aortic endothelial cell proliferation and causes cell apoptosis. The protein is Collagen alpha-1(VIII) chain (COL8A1) of Homo sapiens (Human).